The chain runs to 323 residues: tRNA dimethylallyltransferase (323 aa).

12–19 (GPTASGKT) contributes to the ATP binding site. 14 to 19 (TASGKT) contributes to the substrate binding site. Interaction with substrate tRNA regions lie at residues 37–40 (DSAL) and 161–165 (QRLVR).

This sequence belongs to the IPP transferase family. In terms of assembly, monomer. Mg(2+) serves as cofactor.

The catalysed reaction is adenosine(37) in tRNA + dimethylallyl diphosphate = N(6)-dimethylallyladenosine(37) in tRNA + diphosphate. Functionally, catalyzes the transfer of a dimethylallyl group onto the adenine at position 37 in tRNAs that read codons beginning with uridine, leading to the formation of N6-(dimethylallyl)adenosine (i(6)A). This is tRNA dimethylallyltransferase from Stutzerimonas stutzeri (strain A1501) (Pseudomonas stutzeri).